The sequence spans 135 residues: CTP pyrophosphohydrolase (135 aa).

In terms of domain architecture, Nudix hydrolase spans 2–127; sequence KMIEVVAAII…DIPLLEAFMA (126 aa). Substrate contacts are provided by residues 34–39, arginine 72, and aspartate 118; that span reads FAGGKV. The short motif at 37-58 is the Nudix box element; it reads GKVEPDESQRQALVRELREELG.

The protein belongs to the Nudix hydrolase family. As to quaternary structure, monomer. Requires Mg(2+) as cofactor. It depends on Mn(2+) as a cofactor.

The catalysed reaction is CTP + H2O = CMP + diphosphate + H(+). It carries out the reaction dCTP + H2O = dCMP + diphosphate + H(+). Its function is as follows. Hydrolase with a preference for pyrimidine substrates. Has high activity with 5-methyl-dCTP, and much lower activity with CTP, dCTP, 5-hydroxy-dCTP, 2-hydroxy-dATP and 8-hydroxy-dGTP. This is CTP pyrophosphohydrolase (nudG) from Escherichia coli (strain K12).